A 615-amino-acid polypeptide reads, in one-letter code: Neurosecretory protein VGF (615 aa).

The first 22 residues, 1-22 (MKALRLSASALFCLLLINGLGA), serve as a signal peptide directing secretion. Disordered regions lie at residues 22–201 (AAPP…ESPG) and 218–257 (PERA…PKTH). Pro residues-rich tracts occupy residues 25-35 (PGRPEAQPPPL) and 129-141 (PESP…PRPQ). Residues 179-194 (ETAAAETETRTHTLTR) are compositionally biased toward low complexity. Gln310 carries the pyrrolidone carboxylic acid modification. The interval 342-600 (RQRGLGGRGL…EAEERRLQEQ (259 aa)) is disordered. The segment covering 378-394 (VGEEDEEAAEAEAEAEE) has biased composition (acidic residues). Positions 415–433 (AEDKRSQEETPGHRRKEAE) are enriched in basic and acidic residues. Residue Ser420 is modified to Phosphoserine; by FAM20C. Thr424 is modified (phosphothreonine; by FAM20C). Positions 434–448 (GTEEGGEEEDDEEMD) are enriched in acidic residues. Positions 487 to 497 (PPEPVPPPRAA) are enriched in pro residues. Pro577 carries the proline amide modification. The segment covering 577–599 (PGREAQARRAQEEAEAEERRLQE) has biased composition (basic and acidic residues).

In terms of assembly, interacts with HSPA8 on cell membrane. Interacts with C3AR1. Interacts with C1QBP. Post-translationally, multiple peptides are derived from VGF, with activities in synaptic plasticity, antidepression, penile erection, autonomic activation, and increases in energy expenditure. Central and peripheral nervous systems, synthesized exclusively in neuronal and neuroendocrine cells.

Its subcellular location is the secreted. The protein localises to the cytoplasmic vesicle. It is found in the secretory vesicle. Secreted polyprotein that is packaged and proteolytically processed by prohormone convertases PCSK1 and PCSK2 in a cell-type-specific manner. VGF and peptides derived from its processing play many roles in neurogenesis and neuroplasticity associated with learning, memory, depression and chronic pain. Functionally, plays a role in the control of body fluid homeostasis by regulating vasopressin release. Suppresses presynaptic glutamatergic neurons connected to vasopressin neurons. In terms of biological role, plays a role in the control of body fluid homeostasis by regulating vasopressin release. Activates GABAergic interneurons which are inhibitory neurons of the nervous system and thereby suppresses presynaptic glutamatergic neurons. Also stimulates feeding behavior in an orexin-dependent manner in the hypothalamus. Functions as a positive regulator for the activation of orexin neurons resulting in elevated gastric acid secretion and gastric emptying. Its function is as follows. Secreted multifunctional neuropeptide that binds to different cell receptors and thereby plays multiple physiological roles including modulation of energy expenditure, pain, response to stress, gastric regulation, glucose homeostasis as well as lipolysis. Activates the G-protein-coupled receptor C3AR1 via a folding-upon-binding mechanism leading to enhanced lipolysis in adipocytes. Interacts with C1QBP receptor in macrophages and microglia causing increased levels of intracellular calcium and hypersensitivity. Plays a role in the regulation of memory formation and depression-related behaviors potentially by influencing synaptic plasticity and neurogenesis. Induces acute and transient activation of the NTRK2/TRKB receptor and subsequent CREB phosphorylation. Also induces insulin secretion in insulinoma cells by increasing intracellular calcium mobilization. Functionally, has bactericidal activity against M.luteus, and antifungal activity against P. Pastoris. This Homo sapiens (Human) protein is Neurosecretory protein VGF (VGF).